We begin with the raw amino-acid sequence, 268 residues long: ELL-associated factor 1 (268 aa).

Positions 106–268 (IQVKKTRAEG…LSESGSDSDD (163 aa)) are disordered. The segment covering 128-154 (TRPPQTSQPPPPPPPMPFRAPTKPPVG) has biased composition (pro residues). Position 165 is a phosphoserine (Ser165). Positions 171–181 (DDIKRELRAEV) are enriched in basic and acidic residues. Positions 182-262 (DIIEQMSSSS…LRNDLQLSES (81 aa)) are necessary for transactivation activity. Positions 188–213 (SSSSGSSSSDSESSSGSDDDSSSSGG) are enriched in low complexity. Positions 238–268 (NGTSRPQGSNQLMNTLRNDLQLSESGSDSDD) are enriched in polar residues.

Belongs to the EAF family. In terms of assembly, component of the super elongation complex (SEC), at least composed of EAF1, EAF2, CDK9, MLLT3/AF9, AFF (AFF1 or AFF4), the P-TEFb complex and ELL (ELL, ELL2 or ELL3). Interacts with ELL and ELL2. In terms of tissue distribution, strongly expressed in heart, brain, placenta, lung, liver, skeletal muscle, kidney, pancreas, spleen, prostate, testis, small intestine and colon. Poorly expressed in thymus.

It is found in the nucleus speckle. Its subcellular location is the nucleus. It localises to the cajal body. Acts as a transcriptional transactivator of ELL and ELL2 elongation activities. In Homo sapiens (Human), this protein is ELL-associated factor 1 (EAF1).